Here is a 525-residue protein sequence, read N- to C-terminus: GMP synthase [glutamine-hydrolyzing] (525 aa).

One can recognise a Glutamine amidotransferase type-1 domain in the interval 9 to 207; it reads RILILDFGSQ…VLDICQCEKL (199 aa). Residue Cys86 is the Nucleophile of the active site. Residues His181 and Glu183 contribute to the active site. In terms of domain architecture, GMPS ATP-PPase spans 208 to 400; sequence WTPDAIIEDA…LGLPYDMLYR (193 aa). 235–241 serves as a coordination point for ATP; it reads SGGVDSS.

In terms of assembly, homodimer.

The catalysed reaction is XMP + L-glutamine + ATP + H2O = GMP + L-glutamate + AMP + diphosphate + 2 H(+). It participates in purine metabolism; GMP biosynthesis; GMP from XMP (L-Gln route): step 1/1. Functionally, catalyzes the synthesis of GMP from XMP. This chain is GMP synthase [glutamine-hydrolyzing], found in Pseudoalteromonas atlantica (strain T6c / ATCC BAA-1087).